We begin with the raw amino-acid sequence, 686 residues long: Methionine--tRNA ligase (686 aa).

The 'HIGH' region signature appears at 15–25 (PYANGSIHLGH). Zn(2+)-binding residues include C146, C149, C159, and C162. The short motif at 332–336 (KMSKS) is the 'KMSKS' region element. Residue K335 participates in ATP binding. Positions 585 to 686 (AFEAVDMRIA…EGAQPGMRVM (102 aa)) constitute a tRNA-binding domain.

Belongs to the class-I aminoacyl-tRNA synthetase family. MetG type 1 subfamily. Homodimer. Requires Zn(2+) as cofactor.

Its subcellular location is the cytoplasm. It catalyses the reaction tRNA(Met) + L-methionine + ATP = L-methionyl-tRNA(Met) + AMP + diphosphate. Its function is as follows. Is required not only for elongation of protein synthesis but also for the initiation of all mRNA translation through initiator tRNA(fMet) aminoacylation. In Aliivibrio salmonicida (strain LFI1238) (Vibrio salmonicida (strain LFI1238)), this protein is Methionine--tRNA ligase.